The following is a 530-amino-acid chain: Probable NADH-specific resorcinol 4-hydroxylase (530 aa).

The enzyme catalyses resorcinol + NADH + O2 + H(+) = benzene-1,2,4-triol + NAD(+) + H2O. Its function is as follows. Single-component hydroxylase that is part of the gamma-resorcylate (GRA) degradation pathway. GRA is initially converted by GRA decarboxylase to resorcinol, which is hydroxylated by resorcinol 4-hydroxylase. The protein is Probable NADH-specific resorcinol 4-hydroxylase (tsdB) of Rhodococcus jostii (strain RHA1).